Reading from the N-terminus, the 209-residue chain is MARYCGPKNRIARRFGANIFGRSRNPLLKKPHPPGQHGMQRKKKSDYGLQLEEKQKLKACYGMILEKQLVKAFKEVVHKQGSVTKMFLERFECRLDNMVYRMGFAKTIFAAQQLVAHGHVLVNGKKVDRRSFFLRPGMQVSLKEKSRKLQSVQESLENKDESSLPSYISLDKGNFKGELLMSPEQDQMEAQLPLPVDISVVCEFLSHRT.

The tract at residues 23 to 46 is disordered; that stretch reads SRNPLLKKPHPPGQHGMQRKKKSD. In terms of domain architecture, S4 RNA-binding spans 93-156; the sequence is CRLDNMVYRM…RKLQSVQESL (64 aa).

It belongs to the universal ribosomal protein uS4 family. Part of the 30S ribosomal subunit. Contacts protein S5. The interaction surface between S4 and S5 is involved in control of translational fidelity.

Its function is as follows. One of the primary rRNA binding proteins, it binds directly to 16S rRNA where it nucleates assembly of the body of the 30S subunit. In terms of biological role, with S5 and S12 plays an important role in translational accuracy. The polypeptide is Small ribosomal subunit protein uS4 (Chlamydia felis (strain Fe/C-56) (Chlamydophila felis)).